Reading from the N-terminus, the 226-residue chain is Putative pyridoxamine 5'-phosphate oxidase (226 aa).

16-19 (LNSH) serves as a coordination point for pyridoxal 5'-phosphate. FMN is bound at residue 72–75 (RMVL). Residue Lys-77 participates in pyridoxal 5'-phosphate binding. FMN is bound by residues 87–88 (YT), 93–94 (RK), and Gln-116. The pyridoxal 5'-phosphate site is built by Tyr-134, Arg-138, and Ser-142. Residues 151–152 (QS) and Trp-199 each bind FMN. 205-207 (RLH) is a pyridoxal 5'-phosphate binding site. Arg-209 contributes to the FMN binding site.

The protein belongs to the pyridoxamine 5'-phosphate oxidase family. As to quaternary structure, homodimer. The cofactor is FMN.

It carries out the reaction pyridoxamine 5'-phosphate + O2 + H2O = pyridoxal 5'-phosphate + H2O2 + NH4(+). The enzyme catalyses pyridoxine 5'-phosphate + O2 = pyridoxal 5'-phosphate + H2O2. It participates in cofactor metabolism; pyridoxal 5'-phosphate salvage; pyridoxal 5'-phosphate from pyridoxamine 5'-phosphate: step 1/1. The protein operates within cofactor metabolism; pyridoxal 5'-phosphate salvage; pyridoxal 5'-phosphate from pyridoxine 5'-phosphate: step 1/1. In terms of biological role, catalyzes the oxidation of either pyridoxine 5'-phosphate (PNP) or pyridoxamine 5'-phosphate (PMP) into pyridoxal 5'-phosphate (PLP). The chain is Putative pyridoxamine 5'-phosphate oxidase from Caenorhabditis elegans.